Consider the following 549-residue polypeptide: Glucose-6-phosphate isomerase (549 aa).

Catalysis depends on Glu354, which acts as the Proton donor. Active-site residues include His385 and Lys513.

It belongs to the GPI family.

The protein localises to the cytoplasm. It catalyses the reaction alpha-D-glucose 6-phosphate = beta-D-fructose 6-phosphate. The protein operates within carbohydrate biosynthesis; gluconeogenesis. Its pathway is carbohydrate degradation; glycolysis; D-glyceraldehyde 3-phosphate and glycerone phosphate from D-glucose: step 2/4. In terms of biological role, catalyzes the reversible isomerization of glucose-6-phosphate to fructose-6-phosphate. The sequence is that of Glucose-6-phosphate isomerase from Nitrosococcus oceani (strain ATCC 19707 / BCRC 17464 / JCM 30415 / NCIMB 11848 / C-107).